Here is a 384-residue protein sequence, read N- to C-terminus: Succinyl-diaminopimelate desuccinylase (384 aa).

His-71 is a binding site for Zn(2+). The active site involves Asp-73. Asp-104 serves as a coordination point for Zn(2+). Glu-139 functions as the Proton acceptor in the catalytic mechanism. Positions 140, 168, and 357 each coordinate Zn(2+).

It belongs to the peptidase M20A family. DapE subfamily. In terms of assembly, homodimer. Requires Zn(2+) as cofactor. It depends on Co(2+) as a cofactor.

The enzyme catalyses N-succinyl-(2S,6S)-2,6-diaminopimelate + H2O = (2S,6S)-2,6-diaminopimelate + succinate. It participates in amino-acid biosynthesis; L-lysine biosynthesis via DAP pathway; LL-2,6-diaminopimelate from (S)-tetrahydrodipicolinate (succinylase route): step 3/3. Catalyzes the hydrolysis of N-succinyl-L,L-diaminopimelic acid (SDAP), forming succinate and LL-2,6-diaminopimelate (DAP), an intermediate involved in the bacterial biosynthesis of lysine and meso-diaminopimelic acid, an essential component of bacterial cell walls. This Bradyrhizobium sp. (strain BTAi1 / ATCC BAA-1182) protein is Succinyl-diaminopimelate desuccinylase.